The following is a 226-amino-acid chain: Endonuclease V (226 aa).

Mg(2+) is bound by residues Asp-42 and Asp-110.

It belongs to the endonuclease V family. It depends on Mg(2+) as a cofactor.

The protein resides in the cytoplasm. It carries out the reaction Endonucleolytic cleavage at apurinic or apyrimidinic sites to products with a 5'-phosphate.. DNA repair enzyme involved in the repair of deaminated bases. Selectively cleaves double-stranded DNA at the second phosphodiester bond 3' to a deoxyinosine leaving behind the intact lesion on the nicked DNA. The polypeptide is Endonuclease V (Thermus thermophilus (strain ATCC BAA-163 / DSM 7039 / HB27)).